Consider the following 217-residue polypeptide: Adenylate kinase (217 aa).

10–15 (GAGKGT) is a binding site for ATP. The NMP stretch occupies residues 30–59 (STGDMFRAAMKEETDLGLEAKSYIDKGELV). AMP contacts are provided by residues threonine 31, arginine 36, 57–59 (ELV), 85–88 (GFPR), and glutamine 92. Residues 126-163 (GRRICKNCGATYHLVFNPPAKENVCDKCGGELYQREDD) are LID. An ATP-binding site is contributed by arginine 127. Zn(2+)-binding residues include cysteine 130 and cysteine 133. 136 to 137 (TY) provides a ligand contact to ATP. Residues cysteine 150 and cysteine 153 each coordinate Zn(2+). Arginine 160 and arginine 171 together coordinate AMP. Residue lysine 199 participates in ATP binding.

The protein belongs to the adenylate kinase family. As to quaternary structure, monomer.

It is found in the cytoplasm. The enzyme catalyses AMP + ATP = 2 ADP. Its pathway is purine metabolism; AMP biosynthesis via salvage pathway; AMP from ADP: step 1/1. Catalyzes the reversible transfer of the terminal phosphate group between ATP and AMP. Plays an important role in cellular energy homeostasis and in adenine nucleotide metabolism. The chain is Adenylate kinase from Bacillus licheniformis (strain ATCC 14580 / DSM 13 / JCM 2505 / CCUG 7422 / NBRC 12200 / NCIMB 9375 / NCTC 10341 / NRRL NRS-1264 / Gibson 46).